We begin with the raw amino-acid sequence, 143 residues long: Large ribosomal subunit protein uL11 (143 aa).

This sequence belongs to the universal ribosomal protein uL11 family. In terms of assembly, part of the ribosomal stalk of the 50S ribosomal subunit. Interacts with L10 and the large rRNA to form the base of the stalk. L10 forms an elongated spine to which L12 dimers bind in a sequential fashion forming a multimeric L10(L12)X complex. Post-translationally, one or more lysine residues are methylated.

Its function is as follows. Forms part of the ribosomal stalk which helps the ribosome interact with GTP-bound translation factors. In Burkholderia cenocepacia (strain HI2424), this protein is Large ribosomal subunit protein uL11.